The following is a 541-amino-acid chain: GMP synthase [glutamine-hydrolyzing] (541 aa).

The Glutamine amidotransferase type-1 domain maps to 17–212 (TILVLDFGSQ…AVDICQSTTD (196 aa)). Cys93 functions as the Nucleophile in the catalytic mechanism. Residues His186 and Glu188 contribute to the active site. Residues 213 to 416 (WTMGKFVDQE…LGIPEDLVWR (204 aa)) enclose the GMPS ATP-PPase domain. 241-247 (SGGVDST) is an ATP binding site. XMP-binding residues include Arg315, Asp478, Lys533, and Glu539.

As to quaternary structure, homodimer. Requires Mg(2+) as cofactor.

The protein localises to the cytoplasm. It localises to the cytosol. It catalyses the reaction XMP + L-glutamine + ATP + H2O = GMP + L-glutamate + AMP + diphosphate + 2 H(+). It participates in purine metabolism; GMP biosynthesis; GMP from XMP (L-Gln route): step 1/1. In terms of biological role, catalyzes the conversion of xanthine monophosphate (XMP) to GMP in the presence of glutamine and ATP through an adenyl-XMP intermediate. The chain is GMP synthase [glutamine-hydrolyzing] (GUA1) from Phaeosphaeria nodorum (strain SN15 / ATCC MYA-4574 / FGSC 10173) (Glume blotch fungus).